The sequence spans 340 residues: Extracellular matrix protein-binding protein emp (340 aa).

Positions 1 to 26 (MKKKLLVLTMSTLFATQIMNSNHAKA) are cleaved as a signal peptide.

The protein localises to the cell surface. In terms of biological role, adhesin that binds to the host cell extracellular matrix proteins fibronectin, fibrinogen, collagen, and vitronectin. The sequence is that of Extracellular matrix protein-binding protein emp (emp) from Staphylococcus aureus (strain MSSA476).